The primary structure comprises 355 residues: Probable nitronate monooxygenase (355 aa).

Residues asparagine 71, glutamine 175, glycine 180, glycine 218, and glutamine 237–threonine 240 each bind FMN.

Belongs to the nitronate monooxygenase family. NMO class I subfamily. FMN serves as cofactor.

The catalysed reaction is 3 propionate 3-nitronate + 3 O2 + H2O = 3 3-oxopropanoate + 2 nitrate + nitrite + H2O2 + 3 H(+). Its function is as follows. Nitronate monooxygenase that uses molecular oxygen to catalyze the oxidative denitrification of alkyl nitronates. Acts on propionate 3-nitronate (P3N), the presumed physiological substrate. Probably functions in the detoxification of P3N, a metabolic poison produced by plants and fungi as a defense mechanism. This Staphylococcus aureus (strain MSSA476) protein is Probable nitronate monooxygenase.